The sequence spans 305 residues: Protoheme IX farnesyltransferase (305 aa).

9 consecutive transmembrane segments (helical) span residues 29 to 49 (LIVFCAAIGMLLAVPGAPGLA), 55 to 75 (LWATLGIWLVASAAAAFNCLI), 101 to 121 (ALIFSAVLCSAGMAVLHEAVN), 123 to 143 (LTAWLTLGTFVGYAVIYTVVL), 151 to 171 (IVIGGISGAMPPLLGWAAMTG), 177 to 197 (GLILCLIIFLWTPPHFWALAL), 219 to 241 (FTRLQILLYTFVLLAGTLLPFVQ), 246 to 268 (WLYLAAAFVLGLRFIHYAWRLWR), and 283 to 303 (IWHLSLLFAALLVDHYTQDLL).

The protein belongs to the UbiA prenyltransferase family. Protoheme IX farnesyltransferase subfamily.

The protein localises to the cell inner membrane. It catalyses the reaction heme b + (2E,6E)-farnesyl diphosphate + H2O = Fe(II)-heme o + diphosphate. It functions in the pathway porphyrin-containing compound metabolism; heme O biosynthesis; heme O from protoheme: step 1/1. Converts heme B (protoheme IX) to heme O by substitution of the vinyl group on carbon 2 of heme B porphyrin ring with a hydroxyethyl farnesyl side group. In Leptothrix cholodnii (strain ATCC 51168 / LMG 8142 / SP-6) (Leptothrix discophora (strain SP-6)), this protein is Protoheme IX farnesyltransferase.